The chain runs to 555 residues: Urocanate hydratase (555 aa).

NAD(+) is bound by residues 52–53, Gln130, 176–178, Glu196, Arg201, 242–243, 263–267, 273–274, and Tyr322; these read GG, GMG, NA, QTSAH, and YL. Residue Cys410 is part of the active site. Position 492 (Gly492) interacts with NAD(+).

Belongs to the urocanase family. Requires NAD(+) as cofactor.

It localises to the cytoplasm. It carries out the reaction 4-imidazolone-5-propanoate = trans-urocanate + H2O. It functions in the pathway amino-acid degradation; L-histidine degradation into L-glutamate; N-formimidoyl-L-glutamate from L-histidine: step 2/3. Functionally, catalyzes the conversion of urocanate to 4-imidazolone-5-propionate. In Shewanella baltica (strain OS195), this protein is Urocanate hydratase.